The following is a 212-amino-acid chain: 3-isopropylmalate dehydratase small subunit (212 aa).

Belongs to the LeuD family. LeuD type 1 subfamily. Heterodimer of LeuC and LeuD.

The enzyme catalyses (2R,3S)-3-isopropylmalate = (2S)-2-isopropylmalate. It functions in the pathway amino-acid biosynthesis; L-leucine biosynthesis; L-leucine from 3-methyl-2-oxobutanoate: step 2/4. Catalyzes the isomerization between 2-isopropylmalate and 3-isopropylmalate, via the formation of 2-isopropylmaleate. The chain is 3-isopropylmalate dehydratase small subunit from Pseudomonas aeruginosa (strain UCBPP-PA14).